The sequence spans 106 residues: UPF0145 protein APJL_0492 (106 aa).

It belongs to the UPF0145 family.

This Actinobacillus pleuropneumoniae serotype 3 (strain JL03) protein is UPF0145 protein APJL_0492.